Here is a 214-residue protein sequence, read N- to C-terminus: Endothelin-3 (214 aa).

Positions 1 to 16 are cleaved as a signal peptide; it reads MEPGLWLLLGLTVTSA. A propeptide spanning residues 17 to 94 is cleaved from the precursor; it reads AGLVPCPQSG…DKGLPAHHRP (78 aa). The segment at 24 to 91 is disordered; that stretch reads QSGDSGRASV…KQEDKGLPAH (68 aa). The span at 25 to 35 shows a compositional bias: polar residues; the sequence is SGDSGRASVSQ. 2 cysteine pairs are disulfide-bonded: Cys-97-Cys-111 and Cys-99-Cys-107. The propeptide occupies 118-214; sequence INTPEQTVPY…MSRTDKAHRP (97 aa). Positions 159–173 are endothelin-like; that stretch reads CTCMGADDKACAHFC. Residues 183 to 214 are disordered; the sequence is SGRAERPAAEEMRETGGPRQRLMSRTDKAHRP. Over residues 185–198 the composition is skewed to basic and acidic residues; that stretch reads RAERPAAEEMRETG.

It belongs to the endothelin/sarafotoxin family.

Its subcellular location is the secreted. Its function is as follows. Endothelins are endothelium-derived vasoconstrictor peptides. The sequence is that of Endothelin-3 (Edn3) from Mus musculus (Mouse).